A 72-amino-acid polypeptide reads, in one-letter code: KRALQSEKRRQHNASRRSMTRTYLKKVIAAIASGDKAAATAAFAVAQPIMDRMATKGLIHKNKAARHKSRLS.

It belongs to the bacterial ribosomal protein bS20 family.

Its function is as follows. Binds directly to 16S ribosomal RNA. The protein is Small ribosomal subunit protein bS20 (rpsT) of Aeromonas hydrophila.